A 355-amino-acid polypeptide reads, in one-letter code: NADH-quinone oxidoreductase subunit H (355 aa).

The next 8 membrane-spanning stretches (helical) occupy residues 25 to 45 (IVRI…LILW), 91 to 111 (WLYL…WAVI), 126 to 146 (LLYA…AGWA), 170 to 190 (MGFA…SEIV), 205 to 225 (FLSW…ISGI), 252 to 272 (GMAF…ISAL), 290 to 310 (FIPG…VFIW), and 330 to 350 (VFLP…MSPL).

This sequence belongs to the complex I subunit 1 family. In terms of assembly, NDH-1 is composed of 14 different subunits. Subunits NuoA, H, J, K, L, M, N constitute the membrane sector of the complex.

It localises to the cell inner membrane. The catalysed reaction is a quinone + NADH + 5 H(+)(in) = a quinol + NAD(+) + 4 H(+)(out). NDH-1 shuttles electrons from NADH, via FMN and iron-sulfur (Fe-S) centers, to quinones in the respiratory chain. The immediate electron acceptor for the enzyme in this species is believed to be ubiquinone. Couples the redox reaction to proton translocation (for every two electrons transferred, four hydrogen ions are translocated across the cytoplasmic membrane), and thus conserves the redox energy in a proton gradient. This subunit may bind ubiquinone. The sequence is that of NADH-quinone oxidoreductase subunit H from Burkholderia lata (strain ATCC 17760 / DSM 23089 / LMG 22485 / NCIMB 9086 / R18194 / 383).